The primary structure comprises 181 residues: MSEAPKKRWYVVQAFSGFEGRVATSLREHIKLHNMEDLFGEVMVPTEEVVEIRGGQRRKSERKFFPGYVLVQMVMNDASWHLVRSVPRVMGFIGGTSDRPAPISDKEVDAIMNRLQQVGDKPRPKTLFEPGEMVRVNDGPFADFNGVVEEVDYEKSRLKVSVSIFGRATPVELDFSQVEKA.

One can recognise a KOW domain in the interval 130 to 161 (PGEMVRVNDGPFADFNGVVEEVDYEKSRLKVS).

This sequence belongs to the NusG family. As to quaternary structure, monomer. Interacts with the transcription termination factor Rho and with RNA polymerase.

In terms of biological role, participates in transcription elongation, termination and antitermination. In the absence of Rho, increases the rate of transcription elongation by the RNA polymerase (RNAP), probably by partially suppressing pausing. In the presence of Rho, modulates most Rho-dependent termination events by interacting with the RNAP to render the complex more susceptible to the termination activity of Rho. May be required to overcome a kinetic limitation of Rho to function at certain terminators. Also involved in ribosomal RNA transcriptional antitermination. In Shigella flexneri, this protein is Transcription termination/antitermination protein NusG.